We begin with the raw amino-acid sequence, 578 residues long: NADH-quinone oxidoreductase subunit C/D (578 aa).

The tract at residues 1–167 is NADH dehydrogenase I subunit C; the sequence is MILSLFKLFG…DEFYFTKQKE (167 aa). An NADH dehydrogenase I subunit D region spans residues 192–578; that stretch reads EYMFLNFGPN…IDFVMSDVDR (387 aa).

It in the N-terminal section; belongs to the complex I 30 kDa subunit family. In the C-terminal section; belongs to the complex I 49 kDa subunit family. In terms of assembly, NDH-1 is composed of 13 different subunits. Subunits NuoB, CD, E, F, and G constitute the peripheral sector of the complex.

It localises to the cell inner membrane. It catalyses the reaction a quinone + NADH + 5 H(+)(in) = a quinol + NAD(+) + 4 H(+)(out). Its function is as follows. NDH-1 shuttles electrons from NADH, via FMN and iron-sulfur (Fe-S) centers, to quinones in the respiratory chain. The immediate electron acceptor for the enzyme in this species is believed to be ubiquinone. Couples the redox reaction to proton translocation (for every two electrons transferred, four hydrogen ions are translocated across the cytoplasmic membrane), and thus conserves the redox energy in a proton gradient. This is NADH-quinone oxidoreductase subunit C/D from Buchnera aphidicola subsp. Cinara cedri (strain Cc).